The following is a 406-amino-acid chain: Acetate kinase (406 aa).

A Mg(2+)-binding site is contributed by N10. K17 is a binding site for ATP. Substrate is bound at residue R92. Catalysis depends on D151, which acts as the Proton donor/acceptor. ATP is bound by residues 211–215 (HLGSG), 286–288 (DFR), and 335–339 (GIGEN). E389 contributes to the Mg(2+) binding site.

The protein belongs to the acetokinase family. In terms of assembly, homodimer. The cofactor is Mg(2+). Requires Mn(2+) as cofactor.

The protein resides in the cytoplasm. The enzyme catalyses acetate + ATP = acetyl phosphate + ADP. Its pathway is metabolic intermediate biosynthesis; acetyl-CoA biosynthesis; acetyl-CoA from acetate: step 1/2. Functionally, catalyzes the formation of acetyl phosphate from acetate and ATP. Can also catalyze the reverse reaction. This is Acetate kinase from Buchnera aphidicola subsp. Cinara cedri (strain Cc).